The primary structure comprises 312 residues: RNA binding protein fox-1 homolog 3 (312 aa).

Positions 1-29 (MAQPYPPAQYPPPPQNGIPAEYAPPPPHP) are enriched in pro residues. The disordered stretch occupies residues 1-104 (MAQPYPPAQY…KQQPKRLHVS (104 aa)). The span at 49-87 (TPAQTHPEQPGSEASTQPIAGTQTVPQTDEAAQTDSQPL) shows a compositional bias: polar residues. In terms of domain architecture, RRM spans 100-175 (RLHVSNIPFR…RKIEVNNATA (76 aa)). Residue Arg-223 is modified to Asymmetric dimethylarginine; alternate. An Omega-N-methylarginine; alternate modification is found at Arg-223. Residue Arg-272 is modified to Asymmetric dimethylarginine.

It is found in the nucleus. Its subcellular location is the cytoplasm. Pre-mRNA alternative splicing regulator. Regulates alternative splicing of RBFOX2 to enhance the production of mRNA species that are targeted for nonsense-mediated decay (NMD). The chain is RNA binding protein fox-1 homolog 3 (RBFOX3) from Homo sapiens (Human).